A 142-amino-acid polypeptide reads, in one-letter code: Neuritin (142 aa).

Positions 1 to 27 (MGLTLSGRYISLFLAVQIAYLLQAVRA) are cleaved as a signal peptide. Ala-112 is lipidated: GPI-anchor amidated alanine. Residues 113-142 (GGNGAIRSSVPFGVTLLITALSALVTWMQF) constitute a propeptide, removed in mature form.

Belongs to the neuritin family.

The protein localises to the cell membrane. The protein resides in the synapse. In terms of biological role, modulates postsynaptic dendritic arbor elaboration and synaptic maturation. This Danio rerio (Zebrafish) protein is Neuritin (nrn1).